The following is a 266-amino-acid chain: Tryptophan synthase alpha chain (266 aa).

Active-site proton acceptor residues include glutamate 51 and aspartate 62.

It belongs to the TrpA family. Tetramer of two alpha and two beta chains.

It carries out the reaction (1S,2R)-1-C-(indol-3-yl)glycerol 3-phosphate + L-serine = D-glyceraldehyde 3-phosphate + L-tryptophan + H2O. It functions in the pathway amino-acid biosynthesis; L-tryptophan biosynthesis; L-tryptophan from chorismate: step 5/5. Functionally, the alpha subunit is responsible for the aldol cleavage of indoleglycerol phosphate to indole and glyceraldehyde 3-phosphate. In Thermosynechococcus vestitus (strain NIES-2133 / IAM M-273 / BP-1), this protein is Tryptophan synthase alpha chain.